We begin with the raw amino-acid sequence, 319 residues long: L-lactate dehydrogenase (319 aa).

Residues Val11, Asp32, Arg37, Tyr62, and 76 to 77 contribute to the NAD(+) site; that span reads GV. Substrate contacts are provided by residues Gln79, Arg85, and 117–120; that span reads NPVD. NAD(+) contacts are provided by residues 115-117 and Ser140; that span reads VTN. Residue 145–148 participates in substrate binding; that stretch reads DTAR. Beta-D-fructose 1,6-bisphosphate-binding residues include Arg150 and His165. His172 functions as the Proton acceptor in the catalytic mechanism. A Phosphotyrosine modification is found at Tyr217. Thr226 serves as a coordination point for substrate.

This sequence belongs to the LDH/MDH superfamily. LDH family. As to quaternary structure, homotetramer.

It localises to the cytoplasm. The catalysed reaction is (S)-lactate + NAD(+) = pyruvate + NADH + H(+). The protein operates within fermentation; pyruvate fermentation to lactate; (S)-lactate from pyruvate: step 1/1. Allosterically activated by fructose 1,6-bisphosphate (FBP). Its function is as follows. Catalyzes the conversion of lactate to pyruvate. This is L-lactate dehydrogenase from Thermotoga sp. (strain RQ2).